The primary structure comprises 258 residues: Shikimate dehydrogenase (NADP(+)) (258 aa).

Shikimate is bound by residues 14-16 (SES) and Thr-61. The active-site Proton acceptor is the Lys-65. Shikimate-binding residues include Asn-86 and Asp-101. NADP(+) contacts are provided by residues 125–129 (GSGGS) and Leu-211. Shikimate is bound at residue Tyr-213. Gly-234 lines the NADP(+) pocket.

Belongs to the shikimate dehydrogenase family. As to quaternary structure, homodimer.

It carries out the reaction shikimate + NADP(+) = 3-dehydroshikimate + NADPH + H(+). It functions in the pathway metabolic intermediate biosynthesis; chorismate biosynthesis; chorismate from D-erythrose 4-phosphate and phosphoenolpyruvate: step 4/7. Involved in the biosynthesis of the chorismate, which leads to the biosynthesis of aromatic amino acids. Catalyzes the reversible NADPH linked reduction of 3-dehydroshikimate (DHSA) to yield shikimate (SA). The polypeptide is Shikimate dehydrogenase (NADP(+)) (Clostridium botulinum (strain ATCC 19397 / Type A)).